A 99-amino-acid chain; its full sequence is Aspartyl/glutamyl-tRNA(Asn/Gln) amidotransferase subunit C (99 aa).

Belongs to the GatC family. As to quaternary structure, heterotrimer of A, B and C subunits.

It carries out the reaction L-glutamyl-tRNA(Gln) + L-glutamine + ATP + H2O = L-glutaminyl-tRNA(Gln) + L-glutamate + ADP + phosphate + H(+). The catalysed reaction is L-aspartyl-tRNA(Asn) + L-glutamine + ATP + H2O = L-asparaginyl-tRNA(Asn) + L-glutamate + ADP + phosphate + 2 H(+). Allows the formation of correctly charged Asn-tRNA(Asn) or Gln-tRNA(Gln) through the transamidation of misacylated Asp-tRNA(Asn) or Glu-tRNA(Gln) in organisms which lack either or both of asparaginyl-tRNA or glutaminyl-tRNA synthetases. The reaction takes place in the presence of glutamine and ATP through an activated phospho-Asp-tRNA(Asn) or phospho-Glu-tRNA(Gln). The polypeptide is Aspartyl/glutamyl-tRNA(Asn/Gln) amidotransferase subunit C (Corynebacterium efficiens (strain DSM 44549 / YS-314 / AJ 12310 / JCM 11189 / NBRC 100395)).